Here is a 476-residue protein sequence, read N- to C-terminus: MNILFAVSECVPFVKSGGLADVAGALPKELKKLGVEVRIILPNYSLIPQKLRDGCTLHKVINVPLGWRNQYCGILKGEQDGITYYLIDNEYYFKRDSLYGHYDDGERFSYFSKAVLECIPHLDFEVDVLHSHDWHTAMVNFLLREKYQDNPLYEHIKTVYTIHNLQFQGVFPPEVMYDLLELGDEYFHSEQLEFYGNVNFMKGGIIASDQITAVSPTYKEEIQYEFFGEKLDGLLRKYNDKLSGIVNGIDTSVYNPETDSYITAQYDADSLYEKNENKRALQRYFGLPEKEDTPIISMVTRLTKQKGLDLVRTVFREIMEEDVQCIILGSGDSEYEQFFEWMAYEYPEKVKVYIGFNEELAHQVYAGSDLFLMPSLFEPCGLGQLIALAYGTIPIVRETGGLNDTVQSYDEETGEGNGFSFTNFNAHDMLHTVRRAIEFYHDKPVWEQLVKQAMTEDYSWEKSALAYKKLYKSLME.

Residue K15 participates in ADP-alpha-D-glucose binding.

This sequence belongs to the glycosyltransferase 1 family. Bacterial/plant glycogen synthase subfamily.

The catalysed reaction is [(1-&gt;4)-alpha-D-glucosyl](n) + ADP-alpha-D-glucose = [(1-&gt;4)-alpha-D-glucosyl](n+1) + ADP + H(+). The protein operates within glycan biosynthesis; glycogen biosynthesis. Functionally, synthesizes alpha-1,4-glucan chains using ADP-glucose. This is Glycogen synthase from Bacillus cereus (strain Q1).